Here is a 388-residue protein sequence, read N- to C-terminus: Mannitol-1-phosphate 5-dehydrogenase (388 aa).

An NAD(+)-binding site is contributed by Ala-3 to Gly-14.

It belongs to the mannitol dehydrogenase family.

It carries out the reaction D-mannitol 1-phosphate + NAD(+) = beta-D-fructose 6-phosphate + NADH + H(+). In Buchnera aphidicola subsp. Schizaphis graminum (strain Sg), this protein is Mannitol-1-phosphate 5-dehydrogenase.